The following is a 226-amino-acid chain: Putative type II restriction enzyme MjaVIP (226 aa).

It belongs to the BsaWI type II restriction endonuclease family.

The enzyme catalyses Endonucleolytic cleavage of DNA to give specific double-stranded fragments with terminal 5'-phosphates.. In terms of biological role, a P subtype restriction enzyme that recognizes the double-stranded sequence 5'-CCGG-3'; the cleavage site is unknown. This Methanocaldococcus jannaschii (strain ATCC 43067 / DSM 2661 / JAL-1 / JCM 10045 / NBRC 100440) (Methanococcus jannaschii) protein is Putative type II restriction enzyme MjaVIP (mjaVIRP).